We begin with the raw amino-acid sequence, 101 residues long: Small ribosomal subunit protein uS14 (101 aa).

This sequence belongs to the universal ribosomal protein uS14 family. As to quaternary structure, part of the 30S ribosomal subunit. Contacts proteins S3 and S10.

Its function is as follows. Binds 16S rRNA, required for the assembly of 30S particles and may also be responsible for determining the conformation of the 16S rRNA at the A site. The protein is Small ribosomal subunit protein uS14 of Buchnera aphidicola subsp. Schizaphis graminum (strain Sg).